The following is a 355-amino-acid chain: Neutral protease 2 homolog AFUB_100460 (355 aa).

A signal peptide spans 1-19; the sequence is MKITALASAILAVAQGALA. Positions 20–172 are excised as a propeptide; sequence LPARAPALDI…PASIKPLDRR (153 aa). Intrachain disulfides connect cysteine 179–cysteine 251 and cysteine 258–cysteine 276. Histidine 300 contributes to the Zn(2+) binding site. Residue glutamate 301 is part of the active site. Zn(2+) contacts are provided by histidine 304 and aspartate 315.

Belongs to the peptidase M35 family. Zn(2+) is required as a cofactor.

The protein localises to the secreted. The catalysed reaction is Preferential cleavage of bonds with hydrophobic residues in P1'. Also 3-Asn-|-Gln-4 and 8-Gly-|-Ser-9 bonds in insulin B chain.. Its function is as follows. Secreted metalloproteinase that allows assimilation of proteinaceous substrates. Shows high activities on basic nuclear substrates such as histone and protamine. May be involved in virulence. This Aspergillus fumigatus (strain CBS 144.89 / FGSC A1163 / CEA10) (Neosartorya fumigata) protein is Neutral protease 2 homolog AFUB_100460.